Consider the following 312-residue polypeptide: Fe-S cluster assembly protein DRE2 (312 aa).

The segment at 7–139 (LSDVPRVLLL…VKPVFEEQSV (133 aa)) is N-terminal SAM-like domain. The interval 140–204 (LLPFSINRSQ…EDELINEDEL (65 aa)) is linker. [2Fe-2S] cluster contacts are provided by Cys214, Cys225, Cys228, and Cys230. The tract at residues 214–230 (CRPKAGKRRRACKDCTC) is fe-S binding site A. The [4Fe-4S] cluster site is built by Cys275, Cys278, Cys286, and Cys289. 2 short sequence motifs (cx2C motif) span residues 275–278 (CGNC) and 286–289 (CDGC). The segment at 275–289 (CGNCSLGDAFRCDGC) is fe-S binding site B.

The protein belongs to the anamorsin family. In terms of assembly, monomer. Interacts with TAH18. Interacts with MIA40. It depends on [2Fe-2S] cluster as a cofactor. The cofactor is [4Fe-4S] cluster.

It is found in the cytoplasm. The protein resides in the mitochondrion intermembrane space. Its function is as follows. Component of the cytosolic iron-sulfur (Fe-S) protein assembly (CIA) machinery required for the maturation of extramitochondrial Fe-S proteins. Part of an electron transfer chain functioning in an early step of cytosolic Fe-S biogenesis, facilitating the de novo assembly of a [4Fe-4S] cluster on the scaffold complex CFD1-NBP35. Electrons are transferred to DRE2 from NADPH via the FAD- and FMN-containing protein TAH18. TAH18-DRE2 are also required for the assembly of the diferric tyrosyl radical cofactor of ribonucleotide reductase (RNR), probably by providing electrons for reduction during radical cofactor maturation in the catalytic small subunit RNR2. The sequence is that of Fe-S cluster assembly protein DRE2 from Arthroderma otae (strain ATCC MYA-4605 / CBS 113480) (Microsporum canis).